The primary structure comprises 204 residues: Holliday junction branch migration complex subunit RuvA (204 aa).

A domain I region spans residues 1–64; it reads MIGRLRGILL…EDAQLLYGFN (64 aa). The tract at residues 65–143 is domain II; sequence TVKERALFRE…GWSAGDLFTP (79 aa). A flexible linker region spans residues 144–155; it reads FTDAAPVDSGST. Residues 156–204 form a domain III region; sequence SSNSAEEEAVSALLALGYKPVQASKVVSQIAKPDMTSEQLIREALKSMV.

It belongs to the RuvA family. In terms of assembly, homotetramer. Forms an RuvA(8)-RuvB(12)-Holliday junction (HJ) complex. HJ DNA is sandwiched between 2 RuvA tetramers; dsDNA enters through RuvA and exits via RuvB. An RuvB hexamer assembles on each DNA strand where it exits the tetramer. Each RuvB hexamer is contacted by two RuvA subunits (via domain III) on 2 adjacent RuvB subunits; this complex drives branch migration. In the full resolvosome a probable DNA-RuvA(4)-RuvB(12)-RuvC(2) complex forms which resolves the HJ.

It is found in the cytoplasm. In terms of biological role, the RuvA-RuvB-RuvC complex processes Holliday junction (HJ) DNA during genetic recombination and DNA repair, while the RuvA-RuvB complex plays an important role in the rescue of blocked DNA replication forks via replication fork reversal (RFR). RuvA specifically binds to HJ cruciform DNA, conferring on it an open structure. The RuvB hexamer acts as an ATP-dependent pump, pulling dsDNA into and through the RuvAB complex. HJ branch migration allows RuvC to scan DNA until it finds its consensus sequence, where it cleaves and resolves the cruciform DNA. In Vibrio vulnificus (strain CMCP6), this protein is Holliday junction branch migration complex subunit RuvA.